We begin with the raw amino-acid sequence, 236 residues long: MEPDFQDAYHAFRTAEDEHQLFREIAAIARQLGFDYCCYGARMPLPVSKPAVAIFDTYPAGWMQHYQASGFLDIDPTVRAGASSSDLIVWPVSIRDDAARLWSDARDAGLNIGVARSSWTAHGAFGLLTLARHADPLTAAELGQLSIATHWLANLAHTLMSPFLVPQLVPESNAVLTTREREVLCWTGEGKTAYEIGQILRISERTVNFHVNNVLLKLAATNKVQAVVKAIATGLI.

One can recognise an HTH luxR-type domain in the interval 169-234 (VPESNAVLTT…QAVVKAIATG (66 aa)). A DNA-binding region (H-T-H motif) is located at residues 193–212 (AYEIGQILRISERTVNFHVN).

It belongs to the autoinducer-regulated transcriptional regulatory protein family.

In Ralstonia solanacearum (Pseudomonas solanacearum), this protein is Transcriptional activator protein SolR (solR).